The sequence spans 110 residues: Tyrosine-protein phosphatase 3 (110 aa).

Residues 1-110 (QKCATIVMVT…NPPHSGPIVV (110 aa)) enclose the Tyrosine-protein phosphatase domain. Aspartate 80 serves as a coordination point for substrate.

This sequence belongs to the protein-tyrosine phosphatase family.

The catalysed reaction is O-phospho-L-tyrosyl-[protein] + H2O = L-tyrosyl-[protein] + phosphate. This Styela plicata (Wrinkled sea squirt) protein is Tyrosine-protein phosphatase 3 (STY-3).